The primary structure comprises 86 residues: Myosin light chain alkali (86 aa).

The EF-hand domain maps to 11-46 (GCYEDFIECLKLYDKEENGTMMLAELQHALLALGES).

As to quaternary structure, myosin is a hexamer of 2 heavy chains and 4 light chains.

The protein is Myosin light chain alkali (Mlc1) of Drosophila subobscura (Fruit fly).